Here is a 454-residue protein sequence, read N- to C-terminus: MASKCLKASFSSGSLKVPGGAGGGSARVSTIFSSSSCKLPSFSRGPRSFSACSVGLGKSSCRAASCLPALCLPSGGFATSYSMAGGWFGEGILTGNEKETMQFLNDRLASYLEKCGSWSGRTRSWRAASTSGVSNSALPVPDYQSYFQTIEELQKKTLCTKSENARLVVQIDNAKLAADDFRTKYETEVSMRQLVESDMNGLRRILDDLTLCKADLEAQVESLKEELLCLKKNHEEEVNSLRCQLGDRLNVEVDAAPPVDLNRVLNEMRCQYETLVENNRREAEDWFNTQTEELNQQVVSSSEQLQSYQAEIIELRRTVNALEIELQAQHSMRDALESTLAETEARYSSQLAQMQGLIGNVESQLAEIRCDLERQNQEYQVLLDVRARLECEINTYRGLLDSEDCKLPCNPCAPDHSPSKSCLPCLPAASCGPGMARTTCSPRPICVPCPGSRF.

The interval 1-97 is head; that stretch reads MASKCLKASF…FGEGILTGNE (97 aa). Residues 97-407 form the IF rod domain; sequence EKETMQFLND…GLLDSEDCKL (311 aa). Positions 98–125 are coil 1A; it reads KETMQFLNDRLASYLEKCGSWSGRTRSW. A linker 1 region spans residues 134–142; that stretch reads SNSALPVPD. The coil 1B stretch occupies residues 143 to 243; it reads YQSYFQTIEE…HEEEVNSLRC (101 aa). Residues 244-259 are linker 12; the sequence is QLGDRLNVEVDAAPPV. Residues 260-403 form a coil 2 region; it reads DLNRVLNEMR…NTYRGLLDSE (144 aa). Residues 404 to 454 are tail; the sequence is DCKLPCNPCAPDHSPSKSCLPCLPAASCGPGMARTTCSPRPICVPCPGSRF.

This sequence belongs to the intermediate filament family.

The sequence is that of Keratin, type I cuticular Ha5 from Bos taurus (Bovine).